The primary structure comprises 307 residues: Homoserine kinase (307 aa).

An ATP-binding site is contributed by 91-101; that stretch reads PLARGLGSSAA.

It belongs to the GHMP kinase family. Homoserine kinase subfamily.

The protein localises to the cytoplasm. The enzyme catalyses L-homoserine + ATP = O-phospho-L-homoserine + ADP + H(+). The protein operates within amino-acid biosynthesis; L-threonine biosynthesis; L-threonine from L-aspartate: step 4/5. Functionally, catalyzes the ATP-dependent phosphorylation of L-homoserine to L-homoserine phosphate. The sequence is that of Homoserine kinase from Deinococcus radiodurans (strain ATCC 13939 / DSM 20539 / JCM 16871 / CCUG 27074 / LMG 4051 / NBRC 15346 / NCIMB 9279 / VKM B-1422 / R1).